The following is a 223-amino-acid chain: N-terminal Xaa-Pro-Lys N-methyltransferase 1 (223 aa).

Residues Gly69, Arg74, 91 to 93, 119 to 120, and Gln135 contribute to the S-adenosyl-L-methionine site; these read DVT and LQ.

Belongs to the methyltransferase superfamily. NTM1 family.

Its subcellular location is the nucleus. The catalysed reaction is N-terminal L-alanyl-L-prolyl-L-lysyl-[protein] + 3 S-adenosyl-L-methionine = N-terminal N,N,N-trimethyl-L-alanyl-L-prolyl-L-lysyl-[protein] + 3 S-adenosyl-L-homocysteine + 3 H(+). It carries out the reaction N-terminal L-seryl-L-prolyl-L-lysyl-[protein] + 3 S-adenosyl-L-methionine = N-terminal N,N,N-trimethyl-L-seryl-L-prolyl-L-lysyl-[protein] + 3 S-adenosyl-L-homocysteine + 3 H(+). It catalyses the reaction N-terminal L-prolyl-L-prolyl-L-lysyl-[protein] + 2 S-adenosyl-L-methionine = N-terminal N,N-dimethyl-L-prolyl-L-prolyl-L-lysyl-[protein] + 2 S-adenosyl-L-homocysteine + 2 H(+). Distributive alpha-N-methyltransferase that methylates the N-terminus of target proteins containing the N-terminal motif [Ala/Gly/Pro/Ser]-Pro-Lys when the initiator Met is cleaved. Specifically catalyzes mono-, di- or tri-methylation of the exposed alpha-amino group of the Ala, Gly or Ser residue in the [Ala/Gly/Ser]-Pro-Lys motif and mono- or di-methylation of Pro in the Pro-Pro-Lys motif. Required during mitosis for normal bipolar spindle formation and chromosome segregation via its action on target proteins. This is N-terminal Xaa-Pro-Lys N-methyltransferase 1 (ntmt1) from Danio rerio (Zebrafish).